A 322-amino-acid chain; its full sequence is 4-hydroxy-3-methylbut-2-enyl diphosphate reductase (322 aa).

Residue Cys15 participates in [4Fe-4S] cluster binding. 2 residues coordinate (2E)-4-hydroxy-3-methylbut-2-enyl diphosphate: His44 and His77. Dimethylallyl diphosphate contacts are provided by His44 and His77. The isopentenyl diphosphate site is built by His44 and His77. Cys99 contributes to the [4Fe-4S] cluster binding site. Position 127 (His127) interacts with (2E)-4-hydroxy-3-methylbut-2-enyl diphosphate. His127 is a dimethylallyl diphosphate binding site. His127 contributes to the isopentenyl diphosphate binding site. The active-site Proton donor is Glu129. Thr168 serves as a coordination point for (2E)-4-hydroxy-3-methylbut-2-enyl diphosphate. Cys198 contacts [4Fe-4S] cluster. The (2E)-4-hydroxy-3-methylbut-2-enyl diphosphate site is built by Ser226, Ser227, Asn228, and Ser270. Positions 226, 227, 228, and 270 each coordinate dimethylallyl diphosphate. Ser226, Ser227, Asn228, and Ser270 together coordinate isopentenyl diphosphate.

It belongs to the IspH family. It depends on [4Fe-4S] cluster as a cofactor.

The enzyme catalyses isopentenyl diphosphate + 2 oxidized [2Fe-2S]-[ferredoxin] + H2O = (2E)-4-hydroxy-3-methylbut-2-enyl diphosphate + 2 reduced [2Fe-2S]-[ferredoxin] + 2 H(+). The catalysed reaction is dimethylallyl diphosphate + 2 oxidized [2Fe-2S]-[ferredoxin] + H2O = (2E)-4-hydroxy-3-methylbut-2-enyl diphosphate + 2 reduced [2Fe-2S]-[ferredoxin] + 2 H(+). The protein operates within isoprenoid biosynthesis; dimethylallyl diphosphate biosynthesis; dimethylallyl diphosphate from (2E)-4-hydroxy-3-methylbutenyl diphosphate: step 1/1. It functions in the pathway isoprenoid biosynthesis; isopentenyl diphosphate biosynthesis via DXP pathway; isopentenyl diphosphate from 1-deoxy-D-xylulose 5-phosphate: step 6/6. Functionally, catalyzes the conversion of 1-hydroxy-2-methyl-2-(E)-butenyl 4-diphosphate (HMBPP) into a mixture of isopentenyl diphosphate (IPP) and dimethylallyl diphosphate (DMAPP). Acts in the terminal step of the DOXP/MEP pathway for isoprenoid precursor biosynthesis. This Neisseria gonorrhoeae (strain ATCC 700825 / FA 1090) protein is 4-hydroxy-3-methylbut-2-enyl diphosphate reductase.